Here is a 273-residue protein sequence, read N- to C-terminus: MAKCGVPQRVPGDCFRPVSTRHPRQIPSCFSICFLTHEAQSLRALAHSWWSGALLLLLLFLFLSLEQTSTSYNAKIKQKVGECPRQRLECRNESLSSCKTDFNCKAHFKCCQFACGRKCMDPYEEPCMLPSDKGNCQDILTRWYFDSQKHQCRAFLYSGCRGNANNFLTKTDCRNACMFVEKKGQCPLFPFQMRMECPASCKNDMDCPEKEKCCESRCGFICARVWLVKTGFCPRKPIVCSKIDKPKCLQDIDCPLDEKCCTRCGLKCLKPRH.

A helical membrane pass occupies residues 45-65; the sequence is LAHSWWSGALLLLLLFLFLSL. A WAP 1 domain is found at 76–123; sequence IKQKVGECPRQRLECRNESLSSCKTDFNCKAHFKCCQFACGRKCMDPY. Cystine bridges form between Cys-83/Cys-111, Cys-90/Cys-115, Cys-98/Cys-110, Cys-104/Cys-119, Cys-127/Cys-177, Cys-136/Cys-160, Cys-152/Cys-173, Cys-186/Cys-214, Cys-197/Cys-218, Cys-201/Cys-213, Cys-207/Cys-222, Cys-233/Cys-261, Cys-240/Cys-264, Cys-248/Cys-260, and Cys-254/Cys-268. The BPTI/Kunitz inhibitor domain occupies 127 to 177; sequence CMLPSDKGNCQDILTRWYFDSQKHQCRAFLYSGCRGNANNFLTKTDCRNAC. WAP domains lie at 179-226 and 228-272; these read FVEK…ARVW and VKTG…LKPR.

The protein localises to the membrane. In Mus musculus (Mouse), this protein is WAP four-disulfide core domain protein 8 (Wfdc8).